The following is a 1157-amino-acid chain: Cyclin-dependent kinase 12 (1157 aa).

A disordered region spans residues 15-540 (SDVSSEDFSD…RSPTSRDLKH (526 aa)). Residues 18–32 (SSEDFSDQEAGDLDA) are compositionally biased toward acidic residues. The span at 55–76 (GRLDAKPDKEGYDNYRSRRAED) shows a compositional bias: basic and acidic residues. Positions 85 to 94 (SRQTSSSEAT) are enriched in polar residues. Phosphothreonine is present on T106. A compositionally biased stretch (basic residues) spans 134–162 (RQKRKKQKKEKHKHKSKKKSKKRKKKRAK). Low complexity predominate over residues 163–176 (SYSSIDSMSDNDIN). T184 is subject to Phosphothreonine. Residues 189-215 (PSKSNERTVSAAPSSFTPHNLKESSSP) show a composition bias toward polar residues. 2 positions are modified to phosphoserine: S190 and S192. T217 carries the phosphothreonine modification. Residues 224-255 (PNTNSNYYGESSLETANSALGSNLQVTVTNKQ) are compositionally biased toward polar residues. Low complexity predominate over residues 256–281 (SISNRLRSPPPSSRSSGNGPRFGNSP). Position 280 is a phosphoserine (S280). T283 is modified (phosphothreonine). Phosphoserine occurs at positions 291, 301, and 314. The span at 315–332 (PHKEDVSAHHRSSHDHGY) shows a compositional bias: basic and acidic residues. S353 is modified (phosphoserine). T365 is modified (phosphothreonine). Over residues 392 to 403 (GKYERYSRDRYS) the composition is skewed to basic and acidic residues. Low complexity predominate over residues 408-422 (RSPSVQHSRSRQSPS). Polar residues predominate over residues 444 to 468 (TTVSSTPSHTTRTSKRASGTGTSGD). Low complexity predominate over residues 473-484 (SPRTSSRYMESS). Phosphoserine occurs at positions 487 and 492. Basic residues predominate over residues 495–508 (HHYHHRRSPRMRQR). Residues 518 to 533 (PSSASSESSASRSRSP) show a composition bias toward low complexity. Residue S553 is modified to Phosphoserine. 2 disordered regions span residues 574 to 661 (ERQE…ADVP) and 675 to 782 (PFSA…QRPV). The segment covering 586–603 (GALTINDNSSSVDGNTPN) has biased composition (polar residues). The span at 609 to 623 (SAPGSGTPAAASTTS) shows a compositional bias: low complexity. 2 stretches are compositionally biased toward polar residues: residues 644–656 (NKQNDSVVSNPAS) and 721–731 (VTSSGSANKSV). A phosphoserine mark is found at S730, S743, S747, and S755. Residues 746–760 (LSGDDDVIDSPEDFD) show a composition bias toward acidic residues. The region spanning 804-1098 (FEMIAQIGEG…AEDALRSPWL (295 aa)) is the Protein kinase domain. ATP contacts are provided by residues 810–818 (IGEGTYGQV), K833, and 891–896 (EYMDHD). D936 serves as the catalytic Proton acceptor. H1118 is an ATP binding site.

It belongs to the protein kinase superfamily. CMGC Ser/Thr protein kinase family. CDC2/CDKX subfamily. In terms of assembly, interacts with cyclin CycK.

The protein localises to the nucleus. The protein resides in the chromosome. The catalysed reaction is [DNA-directed RNA polymerase] + ATP = phospho-[DNA-directed RNA polymerase] + ADP + H(+). The enzyme catalyses L-seryl-[protein] + ATP = O-phospho-L-seryl-[protein] + ADP + H(+). It catalyses the reaction L-threonyl-[protein] + ATP = O-phospho-L-threonyl-[protein] + ADP + H(+). Cyclin-dependent kinase which displays CTD kinase activity: hyperphosphorylates the C-terminal heptapeptide repeat domain (CTD) of the largest RNA polymerase II subunit, thereby acting as a key regulator of transcription elongation. The chain is Cyclin-dependent kinase 12 (Cdk12) from Drosophila melanogaster (Fruit fly).